The chain runs to 534 residues: Ankyrin repeat domain-containing protein 34C (534 aa).

ANK repeat units lie at residues 10–39, 43–80, 84–114, and 118–147; these read TDGN…YINE, KGET…DPNI, SGKT…DPSL, and TGAS…AKGK. The disordered stretch occupies residues 159–205; it reads SGTKTTKQYLNVPPSPKVEDRQSPPLCTTPSDVELKTSGLASPPSEK. Ser-301 carries the phosphoserine modification. 2 disordered regions span residues 332–368 and 384–403; these read YEKG…LKDP and QPVG…GPLD. Ser-446 is modified (phosphoserine). Positions 480–503 are disordered; that stretch reads SKPASPLASGLKSMAPVAPNSPKR.

Belongs to the ANKRD34 family.

This chain is Ankyrin repeat domain-containing protein 34C (Ankrd34c), found in Mus musculus (Mouse).